We begin with the raw amino-acid sequence, 128 residues long: Sulfurtransferase TusD (128 aa).

Cys-78 (cysteine persulfide intermediate) is an active-site residue.

It belongs to the DsrE/TusD family. In terms of assembly, heterohexamer, formed by a dimer of trimers. The hexameric TusBCD complex contains 2 copies each of TusB, TusC and TusD. The TusBCD complex interacts with TusE.

The protein resides in the cytoplasm. Functionally, part of a sulfur-relay system required for 2-thiolation of 5-methylaminomethyl-2-thiouridine (mnm(5)s(2)U) at tRNA wobble positions. Accepts sulfur from TusA and transfers it in turn to TusE. The polypeptide is Sulfurtransferase TusD (Buchnera aphidicola subsp. Acyrthosiphon pisum (strain 5A)).